We begin with the raw amino-acid sequence, 238 residues long: Urease subunit alpha (238 aa).

A urease gamma region spans residues 1 to 102 (MKLTPKELDK…LVTVHTPIES (102 aa)). The interval 103 to 238 (KGKLVPGELF…DDNYVKTIKE (136 aa)) is urease beta.

This sequence in the N-terminal section; belongs to the urease gamma subunit family. In the C-terminal section; belongs to the urease beta subunit family. In terms of assembly, heterohexamer of 3 UreA (alpha) and 3 UreB (beta) subunits.

It is found in the cytoplasm. The catalysed reaction is urea + 2 H2O + H(+) = hydrogencarbonate + 2 NH4(+). It functions in the pathway nitrogen metabolism; urea degradation; CO(2) and NH(3) from urea (urease route): step 1/1. This is Urease subunit alpha from Helicobacter acinonychis (strain Sheeba).